A 67-amino-acid polypeptide reads, in one-letter code: DNA gyrase inhibitor YacG (67 aa).

Zn(2+) is bound by residues Cys9, Cys12, Cys28, and Cys32. A disordered region spans residues 48–67 (PVSPDAEDELFSEELPPRAH).

It belongs to the DNA gyrase inhibitor YacG family. In terms of assembly, interacts with GyrB. Zn(2+) serves as cofactor.

Inhibits all the catalytic activities of DNA gyrase by preventing its interaction with DNA. Acts by binding directly to the C-terminal domain of GyrB, which probably disrupts DNA binding by the gyrase. In Pseudomonas fluorescens (strain ATCC BAA-477 / NRRL B-23932 / Pf-5), this protein is DNA gyrase inhibitor YacG.